We begin with the raw amino-acid sequence, 403 residues long: 4-hydroxy-3-methylbut-2-enyl diphosphate reductase (403 aa).

Cys-66 is a binding site for [4Fe-4S] cluster. His-96 is a binding site for (2E)-4-hydroxy-3-methylbut-2-enyl diphosphate. Dimethylallyl diphosphate is bound at residue His-96. His-96 contributes to the isopentenyl diphosphate binding site. Cys-157 serves as a coordination point for [4Fe-4S] cluster. His-185 serves as a coordination point for (2E)-4-hydroxy-3-methylbut-2-enyl diphosphate. His-185 is a binding site for dimethylallyl diphosphate. His-185 is a binding site for isopentenyl diphosphate. The active-site Proton donor is the Glu-187. Thr-250 contacts (2E)-4-hydroxy-3-methylbut-2-enyl diphosphate. Position 288 (Cys-288) interacts with [4Fe-4S] cluster. (2E)-4-hydroxy-3-methylbut-2-enyl diphosphate contacts are provided by Ser-317, Ser-318, Asn-319, and Ser-379. Ser-317, Ser-318, Asn-319, and Ser-379 together coordinate dimethylallyl diphosphate. Ser-317, Ser-318, Asn-319, and Ser-379 together coordinate isopentenyl diphosphate.

This sequence belongs to the IspH family. [4Fe-4S] cluster serves as cofactor.

The enzyme catalyses isopentenyl diphosphate + 2 oxidized [2Fe-2S]-[ferredoxin] + H2O = (2E)-4-hydroxy-3-methylbut-2-enyl diphosphate + 2 reduced [2Fe-2S]-[ferredoxin] + 2 H(+). It catalyses the reaction dimethylallyl diphosphate + 2 oxidized [2Fe-2S]-[ferredoxin] + H2O = (2E)-4-hydroxy-3-methylbut-2-enyl diphosphate + 2 reduced [2Fe-2S]-[ferredoxin] + 2 H(+). It functions in the pathway isoprenoid biosynthesis; dimethylallyl diphosphate biosynthesis; dimethylallyl diphosphate from (2E)-4-hydroxy-3-methylbutenyl diphosphate: step 1/1. It participates in isoprenoid biosynthesis; isopentenyl diphosphate biosynthesis via DXP pathway; isopentenyl diphosphate from 1-deoxy-D-xylulose 5-phosphate: step 6/6. Catalyzes the conversion of 1-hydroxy-2-methyl-2-(E)-butenyl 4-diphosphate (HMBPP) into a mixture of isopentenyl diphosphate (IPP) and dimethylallyl diphosphate (DMAPP). Acts in the terminal step of the DOXP/MEP pathway for isoprenoid precursor biosynthesis. The chain is 4-hydroxy-3-methylbut-2-enyl diphosphate reductase from Picosynechococcus sp. (strain ATCC 27264 / PCC 7002 / PR-6) (Agmenellum quadruplicatum).